Consider the following 255-residue polypeptide: MCATPVSPSPESPRSAQAGAAASDAAAQPVIVRWRGLEDYQASFDAMRAFTGSRSFETSDEIWLVEHPPVFTLGQAGDPAHLLAADSGIPLVKVDRGGQITYHGPGQVVGYLLLDLRRRKLMVRELVTRIEQAVIDTLAAYNLAGERKAGAPGIYVSPEQPNAGLHAGAKIAALGLKIRNGCSYHGVSLNVKMDLQPFLAINPCGYAGLETVDMATLGVAAGWDDVAQTLAASLIANIDGIPAAVGLPQAGAITA.

Positions M1 to A21 are disordered. Positions F56–P242 constitute a BPL/LPL catalytic domain. Substrate contacts are provided by residues R96 to H103, A173 to G175, and G186 to S188. C204 functions as the Acyl-thioester intermediate in the catalytic mechanism.

It belongs to the LipB family.

It localises to the cytoplasm. The catalysed reaction is octanoyl-[ACP] + L-lysyl-[protein] = N(6)-octanoyl-L-lysyl-[protein] + holo-[ACP] + H(+). It functions in the pathway protein modification; protein lipoylation via endogenous pathway; protein N(6)-(lipoyl)lysine from octanoyl-[acyl-carrier-protein]: step 1/2. Functionally, catalyzes the transfer of endogenously produced octanoic acid from octanoyl-acyl-carrier-protein onto the lipoyl domains of lipoate-dependent enzymes. Lipoyl-ACP can also act as a substrate although octanoyl-ACP is likely to be the physiological substrate. The protein is Octanoyltransferase of Paraburkholderia phymatum (strain DSM 17167 / CIP 108236 / LMG 21445 / STM815) (Burkholderia phymatum).